The chain runs to 55 residues: Large ribosomal subunit protein bL33A (55 aa).

It belongs to the bacterial ribosomal protein bL33 family.

This Mycobacterium sp. (strain KMS) protein is Large ribosomal subunit protein bL33A.